The chain runs to 1259 residues: MLIKEYRIPLPLTVEEYRIAQLYMIAKKSREESHGEGSGVEIIINEPYKDGPGGNGQYTKKIYHVGNHLPGWIKSLLPKSALTVEEEAWNAYPYTRTRYTCPFVEKFSLDIETYYYPDNGYQDNVFQLSGSDLRNRIVDVIDIVKDQLWGGDYVKEEDPKHFVSDKTGRGPLAEDWLEEYWREVKGKKQPTPRNMSLMTAYKICRVEFRYWGMQTKLEKFIHDVALRKMMLRAHRQAWAWQDEWFGLTIEDIRELERQTQLALAKKMGGGEECSDDSVSEPYVSTAATAASTTGSERKKSAPAVPPIVTQQPPSAEASSDEEGEEEEDDDEDENDAIGTGVDLSANQGGSAQRSRSQSIQMAQKGKFGSKGALHSPVGSAHSFDLQVANWRMERLEVDSKSNSDEEFFDCLDTNETNSLAKWSSLELLGEGDDSPPPHGGPSSAASVGGRGNSRQEDSIFNQDFLMRVASERGNKRQLRSSASVDRSHDSSPPGSPSTPSCPTTILILVVHAGSVLDAASELTAKKSDVTTFRGSFEAVMRQHYPSLLTHVTIKMVPCPSICTDALGILSSLSPYSFDASPSAADIPNIADVPIGAIPLLSVASPEFHETVNKTVAAANIVYHEFLKSEEGHGFSGQIVMLGDSMGSLLAYEALCRSNGSQPGTASGASNSGGDAATNINTHNPLSPRNSRLDDDERFIEADLDAKRLLVAPSPRRRRSSSSSDSRATKLDFEVCDFFMFGSPLSVVLAARKLHDAKAALPRPNCHQVYNLFHPTDPIASRLEPLLSARFSILAPVNVPRYAKYPLGNGQPLHLLEVIQSHPQHFNDGNNLLAGRRLSDASMQSTISGLIENVSLSTIHALQNKWWGTKRLDYALYCPEGLSNFPAHALPHLFHASYWESPDVIAFILRQIGKFEGIPFVGSNDDKDNASFHPGQPREKWIKKRTSVKLKNVAANHRANDVIVQEGREQRLNARFMYGPLDMITLHGEKVDVHIMKDPPAGEWTFLSTEVTDKNGRISYSIPDQVSLGYGIYPVKMVVRGDHTSVDCYMAVVPPLTECVVFSIDGSFTASMSVTGRDPKVRAGAVDVCRHWQELGYLLIYITGRPDMQQQRVVSWLSQHNFPHGLISFADGLSTDPLGHKTAYLNNLVQNHGISITAAYGSSKDISVYTNVGMRTDQIFIVGKVGKKLQSNATVLSDGYAAHLAGLQAVGGSRPAKGNARMVIPRGCFNLPGQTANPRRRRYLERKTVSSCCLMVFQTT.

The interval Gly-268–Gly-378 is disordered. A phosphoserine mark is found at Ser-274 and Ser-277. Residues Ser-284–Thr-293 show a composition bias toward low complexity. The span at Ser-318–Asp-335 shows a compositional bias: acidic residues. Over residues Gln-347–Gln-363 the composition is skewed to low complexity. Phosphoserine is present on residues Ser-401, Ser-403, and Ser-434. 3 disordered regions span residues Leu-427–Arg-454, Arg-472–Ser-500, and Ser-660–Leu-692. The span at Gly-663–Asn-678 shows a compositional bias: low complexity. Over residues Ile-679–Asn-689 the composition is skewed to polar residues. Positions Leu-730 to Lys-913 constitute a DDHD domain.

Belongs to the PtdIns transfer protein family. PI transfer class IIA subfamily. Expressed in adult heads, not detected in bodies.

The enzyme catalyses a 1,2-diacyl-sn-glycero-3-phospho-(1D-myo-inositol)(in) = a 1,2-diacyl-sn-glycero-3-phospho-(1D-myo-inositol)(out). It carries out the reaction a 1,2-diacyl-sn-glycero-3-phosphate(in) = a 1,2-diacyl-sn-glycero-3-phosphate(out). Functionally, catalyzes the transfer of phosphatidylinositol (PI) and phosphatidic acid (PA) between membranes. May control phosphatidylinositol concentration in transport vesicles from the subrhabdomeric cisternae (SRC) to the rhabdomere. May function as a calcium transporter. The polypeptide is Protein retinal degeneration B (rdgB) (Drosophila melanogaster (Fruit fly)).